The sequence spans 761 residues: Elongation factor G, mitochondrial (761 aa).

A mitochondrion-targeting transit peptide spans 1–33; sequence MTSVLRGVLKTHLPRTLTLPRCARNFQTTTFLR. A tr-type G domain is found at 66 to 347; it reads TRLRNIGISA…SVVDYLPQPN (282 aa). Residues 75–82, 146–150, and 200–203 contribute to the GTP site; these read AHIDSGKT, DTPGH, and NKMD.

The protein belongs to the TRAFAC class translation factor GTPase superfamily. Classic translation factor GTPase family. EF-G/EF-2 subfamily.

The protein resides in the mitochondrion. Its pathway is protein biosynthesis; polypeptide chain elongation. In terms of biological role, mitochondrial GTPase that catalyzes the GTP-dependent ribosomal translocation step during translation elongation. During this step, the ribosome changes from the pre-translocational (PRE) to the post-translocational (POST) state as the newly formed A-site-bound peptidyl-tRNA and P-site-bound deacylated tRNA move to the P and E sites, respectively. Catalyzes the coordinated movement of the two tRNA molecules, the mRNA and conformational changes in the ribosome. This is Elongation factor G, mitochondrial from Candida dubliniensis (strain CD36 / ATCC MYA-646 / CBS 7987 / NCPF 3949 / NRRL Y-17841) (Yeast).